A 349-amino-acid chain; its full sequence is UPF0284 protein MM_0708 (349 aa).

This sequence belongs to the UPF0284 family.

In Methanosarcina mazei (strain ATCC BAA-159 / DSM 3647 / Goe1 / Go1 / JCM 11833 / OCM 88) (Methanosarcina frisia), this protein is UPF0284 protein MM_0708.